We begin with the raw amino-acid sequence, 356 residues long: Carbohydrate sulfotransferase 10 (356 aa).

Topologically, residues 1-6 are cytoplasmic; it reads MHHQWL. A helical; Signal-anchor for type II membrane protein transmembrane segment spans residues 7-27; it reads LLAACFWVIFMFMVASKFITL. Over 28-356 the chain is Lumenal; the sequence is TFKDPDGYSA…GYQKPDFLLN (329 aa). The N-linked (GlcNAc...) asparagine glycan is linked to Asn99. Residues 127 to 133 and 189 to 197 contribute to the 3'-phosphoadenylyl sulfate site; these read PKVGNTQ and RDPFERLIS. Residues Asn228 and Asn316 are each glycosylated (N-linked (GlcNAc...) asparagine).

The protein belongs to the sulfotransferase 2 family. In terms of tissue distribution, in myogenic progenitors, it is ubiquitously expressed.

The protein localises to the golgi apparatus membrane. The enzyme catalyses 3-O-{beta-D-GlcA-(1-&gt;[3)-alpha-D-Xyl-(1-&gt;3)-beta-D-GlcA-(1-&gt;](n)-4)-beta-D-Xyl-(1-&gt;4)-Rib-ol-P-Rib-ol-P-3-beta-D-GalNAc-(1-&gt;3)-beta-D-GlcNAc-(1-&gt;4)-O-6-P-alpha-D-Man}-L-Thr-[protein] + 3'-phosphoadenylyl sulfate = 3-O-{O-3-S-beta-D-GlcA-(1-&gt;[3)-alpha-D-Xyl-(1-&gt;3)-beta-D-GlcA-(1-&gt;](n)-4)-beta-D-Xyl-(1-&gt;4)-Rib-ol-P-Rib-ol-P-3-beta-D-GalNAc-(1-&gt;3)-beta-D-GlcNAc-(1-&gt;4)-O-6-P-alpha-D-Man}-L-Thr-[protein] + adenosine 3',5'-bisphosphate + H(+). It catalyses the reaction 17beta-estradiol 3-O-(beta-D-glucuronate) + 3'-phosphoadenylyl sulfate = 17beta-estradiol 3-O-(3-sulfo-beta-D-glucuronate) + adenosine 3',5'-bisphosphate + H(+). It carries out the reaction 17beta-estradiol 3-O-(beta-D-glucuronate) 17-sulfate + 3'-phosphoadenylyl sulfate = 17beta-estradiol 3-O-(3-sulfo-beta-D-glucuronate) 17-sulfate + adenosine 3',5'-bisphosphate + H(+). The catalysed reaction is 17beta-estradiol 17-O-(beta-D-glucuronate) + 3'-phosphoadenylyl sulfate = 17beta-estradiol 17-O-(3-sulfo-beta-D-glucuronate) + adenosine 3',5'-bisphosphate + H(+). The enzyme catalyses 16alpha,17beta-estriol 3-O-(beta-D-glucuronate) + 3'-phosphoadenylyl sulfate = 16alpha,17beta-estriol 3-O-(3-sulfo-beta-D-glucuronate) + adenosine 3',5'-bisphosphate + H(+). It catalyses the reaction 16alpha,17beta-estriol 16-O-(beta-D-glucuronate) + 3'-phosphoadenylyl sulfate = 16alpha,17beta-estriol 16-O-(3-sulfo-beta-D-glucuronate) + adenosine 3',5'-bisphosphate + H(+). It carries out the reaction 16alpha,17beta-estriol 17-O-(beta-D-glucuronate) + 3'-phosphoadenylyl sulfate = 16alpha,17beta-estriol 17-O-(3-sulfo-beta-D-glucuronate) + adenosine 3',5'-bisphosphate + H(+). The catalysed reaction is estrone 3-O-(beta-D-glucuronate) + 3'-phosphoadenylyl sulfate = estrone 3-O-(3-sulfo-beta-D-glucuronate) + adenosine 3',5'-bisphosphate + H(+). The enzyme catalyses 3alpha,20alpha-dihydroxy-5beta-pregnane 3-O-(beta-D-glucuronate) + 3'-phosphoadenylyl sulfate = 3alpha,20alpha-dihydroxy-5beta-pregnane 3-O-(3-sulfo-beta-D-glucuronate) + adenosine 3',5'-bisphosphate + H(+). It catalyses the reaction testosterone 17-O-(beta-D-glucuronate) + 3'-phosphoadenylyl sulfate = testosterone 17-O-(3-sulfo-beta-D-glucuronate) + adenosine 3',5'-bisphosphate + H(+). It carries out the reaction 3beta-androst-5-en-17-one 3-O-(beta-D-glucuronate) + 3'-phosphoadenylyl sulfate = 3beta-androst-5-en-17-one 3-O-(3-sulfo-beta-D-glucuronate) + adenosine 3',5'-bisphosphate + H(+). The catalysed reaction is 3alpha,17alpha-dihydroxy-5beta-androstane-11-one-17beta-carboxylate 3-O-(beta-D-glucuronate) + 3'-phosphoadenylyl sulfate = 3alpha,17alpha-dihydroxy-5beta-androstane-11-one-17beta-carboxylate 3-O-(3-sulfo-beta-D-glucuronate) + adenosine 3',5'-bisphosphate + H(+). The enzyme catalyses 3alpha-hydroxyetiocholan-17-one 3-O-(beta-D-glucuronate) + 3'-phosphoadenylyl sulfate = 3alpha-hydroxyetiocholan-17-one 3-O-(3-sulfo-beta-D-glucuronate) + adenosine 3',5'-bisphosphate + H(+). It functions in the pathway steroid metabolism. Its pathway is protein modification; carbohydrate sulfation. Its function is as follows. Catalyzes the transfer of sulfate from 3'-phosphoadenylyl sulfate (PAPS) to position 3 of terminal glucuronic acid of both protein- and lipid-linked oligosaccharides. Participates in biosynthesis of HNK-1 carbohydrate structure 3-O-sulfo-beta-D-GlcA-(1-&gt;3)-beta-D-Gal-(1-&gt;4)-D-GlcNAc-R, a sulfated glucuronyl-lactosaminyl residue carried by many neural recognition molecules, which is involved in cell interactions during ontogenetic development and in synaptic plasticity in the adult. May be indirectly involved in synapse plasticity of the hippocampus, via its role in HNK-1 biosynthesis. Sulfates terminal glucuronyl residue of the laminin globular (LG)-domain binding epitope on DAG1/alpha-dystroglycan and prevents further polymerization by LARGE1 glycosyltransferase. Likely defines the chain length of LG epitope, conferring binding specificity to extracellular matrix components. Plays a role in down-regulating the steroid hormones. Sulfates glucuronidated estrogens and androgens with an impact in hormone cycle and fertility. Has a preference for glucuronyl moiety at the 3-hydroxyl group of a sterol ring rather than the 17-hydroxyl group, showing high catalytic efficiency for 17beta-estradiol 3-O-(beta-D-glucuronate) and dehydroepiandrosterone 3-O-(beta-D-glucuronate) hormones. In Rattus norvegicus (Rat), this protein is Carbohydrate sulfotransferase 10 (Chst10).